The primary structure comprises 589 residues: Aspartate--tRNA ligase (589 aa).

Residue Glu171 coordinates L-aspartate. Residues 195–198 (QLFK) form an aspartate region. Arg217 contacts L-aspartate. Residues 217-219 (RDE) and Gln226 each bind ATP. His448 contacts L-aspartate. Position 482 (Glu482) interacts with ATP. Arg489 provides a ligand contact to L-aspartate. 534–537 (GLDR) provides a ligand contact to ATP.

It belongs to the class-II aminoacyl-tRNA synthetase family. Type 1 subfamily. Homodimer.

It localises to the cytoplasm. It carries out the reaction tRNA(Asp) + L-aspartate + ATP = L-aspartyl-tRNA(Asp) + AMP + diphosphate. Catalyzes the attachment of L-aspartate to tRNA(Asp) in a two-step reaction: L-aspartate is first activated by ATP to form Asp-AMP and then transferred to the acceptor end of tRNA(Asp). The sequence is that of Aspartate--tRNA ligase from Idiomarina loihiensis (strain ATCC BAA-735 / DSM 15497 / L2-TR).